Here is a 560-residue protein sequence, read N- to C-terminus: MANHSRPHICQCLTRLASVKRNAVVTVYGNRKRTGREFVDGVLSLAAGLIRLGLRNGDVVSIAAFNSDLFLEWLLAVALVGGVVAPLNYRWSLKEAKMAMLLVEPVLLVTDETCVSWCIDVQNGDIPSLKWRVLMESTSTDFANELNQFLTTEMLKQRTLVPSLATYAWASDDAVVICFTSGTTGRPKGVTISHLAFITQSLAKIAIAGYGEDDVYLHTSPLVHIGGLSSAMAMLMVGACHVLLPKFDAKTALQVMEQNHITCFITVPAMMADLIRVNRTTKNGAENRGVRKILNGGGSLSSELLKEAVNIFPCARILSAYGMTEACSSLTFMTLHDPTQESFKVTYPLLNQPKQGTCVGKPAPHIELMVKLDEDSSRVGKILTRGPHTMLRYWGHQVAQENVETSESRSNEAWLDTGDIGAFDEFGNLWLIGRSNGRIKTGGENVYPEEVEAVLVEHPGIVSAVVIGVIDTRLGEMVVACVRLQEKWIWSDVENRKGSFQLSSETLKHHCRTQNLTGFKIPKRFVRWEKQFPLTTTGKVKRDEVRRQVLSHFQIMTSSL.

Residues 1-15 constitute a chloroplast transit peptide; it reads MANHSRPHICQCLTR. The next 3 membrane-spanning stretches (helical) occupy residues 69–89, 189–209, and 225–245; these read LFLEWLLAVALVGGVVAPLNY, GVTISHLAFITQSLAKIAIAG, and IGGLSSAMAMLMVGACHVLLP. A Microbody targeting signal motif is present at residues 558–560; the sequence is SSL.

It belongs to the ATP-dependent AMP-binding enzyme family. MenE subfamily. In terms of tissue distribution, high expression in young leaves and flowers. Not expressed in roots.

Its subcellular location is the plastid. It localises to the chloroplast membrane. The protein resides in the peroxisome membrane. It catalyses the reaction 2-succinylbenzoate + ATP + CoA = 2-succinylbenzoyl-CoA + AMP + diphosphate. Involved in the biosynthesis of phylloquinone (vitamin K1). Converts 2-succinylbenzoate (OSB) to 2-succinylbenzoyl-CoA (OSB-CoA). The sequence is that of 2-succinylbenzoate--CoA ligase, chloroplastic/peroxisomal (AAE14) from Arabidopsis thaliana (Mouse-ear cress).